The following is a 922-amino-acid chain: DNA gyrase subunit A (922 aa).

A Topo IIA-type catalytic domain is found at 34–534 (LPDVRDGLKP…SSAEINIEDL (501 aa)). Residue Y122 is the O-(5'-phospho-DNA)-tyrosine intermediate of the active site. A GyrA-box motif is present at residues 561–567 (QRRGGRG). Disordered regions lie at residues 715–763 (MQPM…VRPM) and 899–922 (IDGEVSEGTDTAPDAGSAAADPEE). Residues 723–743 (DDVDGDDESVIDAGNDDDGSD) are compositionally biased toward acidic residues.

This sequence belongs to the type II topoisomerase GyrA/ParC subunit family. Heterotetramer, composed of two GyrA and two GyrB chains. In the heterotetramer, GyrA contains the active site tyrosine that forms a transient covalent intermediate with DNA, while GyrB binds cofactors and catalyzes ATP hydrolysis.

It localises to the cytoplasm. The enzyme catalyses ATP-dependent breakage, passage and rejoining of double-stranded DNA.. Functionally, a type II topoisomerase that negatively supercoils closed circular double-stranded (ds) DNA in an ATP-dependent manner to modulate DNA topology and maintain chromosomes in an underwound state. Negative supercoiling favors strand separation, and DNA replication, transcription, recombination and repair, all of which involve strand separation. Also able to catalyze the interconversion of other topological isomers of dsDNA rings, including catenanes and knotted rings. Type II topoisomerases break and join 2 DNA strands simultaneously in an ATP-dependent manner. In Aeromonas salmonicida, this protein is DNA gyrase subunit A.